The chain runs to 512 residues: Methionine--tRNA ligase (512 aa).

Positions 12–22 (YYVNDVPHIGH) match the 'HIGH' region motif. A 'KMSKS' region motif is present at residues 295 to 299 (KISKS). Lysine 298 contributes to the ATP binding site.

This sequence belongs to the class-I aminoacyl-tRNA synthetase family. MetG type 2B subfamily. In terms of assembly, monomer.

It localises to the cytoplasm. The catalysed reaction is tRNA(Met) + L-methionine + ATP = L-methionyl-tRNA(Met) + AMP + diphosphate. Functionally, is required not only for elongation of protein synthesis but also for the initiation of all mRNA translation through initiator tRNA(fMet) aminoacylation. In Rickettsia felis (strain ATCC VR-1525 / URRWXCal2) (Rickettsia azadi), this protein is Methionine--tRNA ligase.